A 259-amino-acid polypeptide reads, in one-letter code: Proteasome subunit alpha (259 aa).

Belongs to the peptidase T1A family. In terms of assembly, the 20S proteasome core is composed of 14 alpha and 14 beta subunits that assemble into four stacked heptameric rings, resulting in a barrel-shaped structure. The two inner rings, each composed of seven catalytic beta subunits, are sandwiched by two outer rings, each composed of seven alpha subunits. The catalytic chamber with the active sites is on the inside of the barrel. Has a gated structure, the ends of the cylinder being occluded by the N-termini of the alpha-subunits. Is capped at one or both ends by the proteasome regulatory ATPase, PAN.

It localises to the cytoplasm. The formation of the proteasomal ATPase PAN-20S proteasome complex, via the docking of the C-termini of PAN into the intersubunit pockets in the alpha-rings, triggers opening of the gate for substrate entry. Interconversion between the open-gate and close-gate conformations leads to a dynamic regulation of the 20S proteasome proteolysis activity. In terms of biological role, component of the proteasome core, a large protease complex with broad specificity involved in protein degradation. This chain is Proteasome subunit alpha, found in Methanococcus maripaludis (strain DSM 14266 / JCM 13030 / NBRC 101832 / S2 / LL).